Here is a 132-residue protein sequence, read N- to C-terminus: uncharacterized protein (132 aa).

The segment at 1–68 is disordered; the sequence is MCSAGELLRG…HTGEPVGDDY (68 aa). The helical transmembrane segment at 100–120 threads the bilayer; sequence VIVIFFWVMLWFLGLQALGLV.

This sequence belongs to the FAM241 family.

It is found in the membrane. This is an uncharacterized protein from Homo sapiens (Human).